The primary structure comprises 95 residues: Glutamyl-tRNA(Gln) amidotransferase subunit C 1 (95 aa).

The protein belongs to the GatC family. Heterotrimer of A, B and C subunits.

It carries out the reaction L-glutamyl-tRNA(Gln) + L-glutamine + ATP + H2O = L-glutaminyl-tRNA(Gln) + L-glutamate + ADP + phosphate + H(+). The enzyme catalyses L-aspartyl-tRNA(Asn) + L-glutamine + ATP + H2O = L-asparaginyl-tRNA(Asn) + L-glutamate + ADP + phosphate + 2 H(+). Its function is as follows. Allows the formation of correctly charged Asn-tRNA(Asn) or Gln-tRNA(Gln) through the transamidation of misacylated Asp-tRNA(Asn) or Glu-tRNA(Gln) in organisms which lack either or both of asparaginyl-tRNA or glutaminyl-tRNA synthetases. The reaction takes place in the presence of glutamine and ATP through an activated phospho-Asp-tRNA(Asn) or phospho-Glu-tRNA(Gln). This is Glutamyl-tRNA(Gln) amidotransferase subunit C 1 (gatC1) from Clostridium acetobutylicum (strain ATCC 824 / DSM 792 / JCM 1419 / IAM 19013 / LMG 5710 / NBRC 13948 / NRRL B-527 / VKM B-1787 / 2291 / W).